A 435-amino-acid chain; its full sequence is Trigger factor (435 aa).

The 86-residue stretch at 161 to 246 (GDKLTLDFTG…IHKTEGPILP (86 aa)) folds into the PPIase FKBP-type domain.

This sequence belongs to the FKBP-type PPIase family. Tig subfamily.

It is found in the cytoplasm. The catalysed reaction is [protein]-peptidylproline (omega=180) = [protein]-peptidylproline (omega=0). Involved in protein export. Acts as a chaperone by maintaining the newly synthesized protein in an open conformation. Functions as a peptidyl-prolyl cis-trans isomerase. This is Trigger factor from Colwellia psychrerythraea (strain 34H / ATCC BAA-681) (Vibrio psychroerythus).